Here is a 510-residue protein sequence, read N- to C-terminus: MFLCVPHYTSITFPQLNDGRKVLRFGSYQRRGFRILAMSSSVSEASNYITAAPIFLPDGPWKQIPGGVTAAKGFKAAGLYGGLRAKGEKPDLALVACDVDAISAGAFTTNVVAAAPVVYCKNALDMSKTARAVLINAGQANAATAKRPSNDYQGDAGYQDVIECANALAKLLQMRPEEVLIESTGVIGHRIKKDALLNSLPKLVSSLSSSTEGADSAAVAITTTDLVSKSVAIESEVGGTNIRVGGMAKGSGMIHPNMATMLGVRLCFLHVLFCKVVTTDALVASDVWRKMVQIAVNRSFNQITVDGDTSTNDTVIALASGLSGSTRISSLISHEAIQLQACLDAVMQGLAKSIAWDGEGATCLIEGSSLVNAATIRIWRYRGHMAMPTGPLRIISLHLWYWAINHVELCFAAVYGRDPNWGRIACAAGYAGIPFQPNKLHISLGEILLMEGGQPLPFDRAAASNYLKKAGETHGTVGIHISIGDGAGRGQAWGCDLSYDYVKINAEYTT.

Thr-223, Lys-249, Glu-359, Asn-505, and Thr-510 together coordinate substrate.

This sequence belongs to the ArgJ family. In terms of assembly, heterodimer of an alpha and a beta chain.

It localises to the plastid. The protein resides in the chloroplast. It catalyses the reaction N(2)-acetyl-L-ornithine + L-glutamate = N-acetyl-L-glutamate + L-ornithine. It carries out the reaction L-glutamate + acetyl-CoA = N-acetyl-L-glutamate + CoA + H(+). It participates in amino-acid biosynthesis; L-arginine biosynthesis; L-ornithine and N-acetyl-L-glutamate from L-glutamate and N(2)-acetyl-L-ornithine (cyclic): step 1/1. The protein operates within amino-acid biosynthesis; L-arginine biosynthesis; N(2)-acetyl-L-ornithine from L-glutamate: step 1/4. Functionally, catalyzes two activities which are involved in the cyclic version of arginine biosynthesis: the synthesis of acetylglutamate from glutamate and acetyl-CoA, and of ornithine by transacetylation between acetylornithine and glutamate. This Vitis vinifera (Grape) protein is Arginine biosynthesis bifunctional protein ArgJ, chloroplastic.